We begin with the raw amino-acid sequence, 294 residues long: Aquaporin NIP1-2 (294 aa).

Met-1 is modified (N-acetylmethionine). Helical transmembrane passes span 54–74 and 82–102; these read LMAE…AVAV and VTLP…VYSL. The NPA 1 motif lies at 111 to 113; the sequence is NPA. The next 3 membrane-spanning stretches (helical) occupy residues 133–153, 177–197, and 201–221; these read VISQ…LFGL, SFVI…GVAT, and AIGE…VIIA. Residues 230–232 carry the NPA 2 motif; sequence NPG. A helical transmembrane segment spans residues 248 to 268; that stretch reads WIYIVSPIVGAVSGAWVYNMV. Position 283 is a phosphoserine (Ser-283).

The protein belongs to the MIP/aquaporin (TC 1.A.8) family. NIP (TC 1.A.8.12) subfamily. As to expression, expressed in developing seeds.

The protein resides in the membrane. Its function is as follows. Water channel probably required to promote glycerol permeability and water transport across cell membranes. The protein is Aquaporin NIP1-2 (NIP1-2) of Arabidopsis thaliana (Mouse-ear cress).